Reading from the N-terminus, the 885-residue chain is Eukaryotic translation initiation factor 3 subunit C (885 aa).

Positions 1–81 (MSFFAKLQGS…SDSDDERQAV (81 aa)) are disordered. Residues 9–28 (GSDSESSSGSESEESILSGS) show a composition bias toward low complexity. Residues 55 to 76 (EESESEEESSDEDEEEMSDSDD) are compositionally biased toward acidic residues. In terms of domain architecture, PCI spans 624 to 797 (FHMHLNVELL…GVVIFHRVEQ (174 aa)). The disordered stretch occupies residues 822-885 (LDVKLGNQGQ…TTMGRRVTAQ (64 aa)). Positions 855-872 (RGTYRGRGGRGGRGGFNQ) are enriched in gly residues.

This sequence belongs to the eIF-3 subunit C family. In terms of assembly, component of the eukaryotic translation initiation factor 3 (eIF-3) complex.

The protein localises to the cytoplasm. Functionally, component of the eukaryotic translation initiation factor 3 (eIF-3) complex, which is involved in protein synthesis of a specialized repertoire of mRNAs and, together with other initiation factors, stimulates binding of mRNA and methionyl-tRNAi to the 40S ribosome. The eIF-3 complex specifically targets and initiates translation of a subset of mRNAs involved in cell proliferation. This chain is Eukaryotic translation initiation factor 3 subunit C, found in Cryptococcus neoformans var. neoformans serotype D (strain B-3501A) (Filobasidiella neoformans).